Reading from the N-terminus, the 432-residue chain is Trigger factor (432 aa).

In terms of domain architecture, PPIase FKBP-type spans 165-250; that stretch reads GDFAKIDFEG…LKEIQVKAPQ (86 aa).

Belongs to the FKBP-type PPIase family. Tig subfamily.

The protein resides in the cytoplasm. It carries out the reaction [protein]-peptidylproline (omega=180) = [protein]-peptidylproline (omega=0). Involved in protein export. Acts as a chaperone by maintaining the newly synthesized protein in an open conformation. Functions as a peptidyl-prolyl cis-trans isomerase. The sequence is that of Trigger factor from Wolinella succinogenes (strain ATCC 29543 / DSM 1740 / CCUG 13145 / JCM 31913 / LMG 7466 / NCTC 11488 / FDC 602W) (Vibrio succinogenes).